Here is a 262-residue protein sequence, read N- to C-terminus: Glutamine-binding protein (262 aa).

Positions 1-26 (MKRKTVWKIWITLALIALLSITALAG) are cleaved as a signal peptide. Residue C27 is the site of N-palmitoyl cysteine attachment. C27 carries the S-diacylglycerol cysteine lipid modification.

Belongs to the bacterial solute-binding protein 3 family.

It is found in the cell membrane. Its function is as follows. Involved in glutamine-transport system. Interacts with the glutamine-transport system GlnPQ. This is Glutamine-binding protein (glnH) from Geobacillus stearothermophilus (Bacillus stearothermophilus).